The primary structure comprises 262 residues: MNWKSYVFPGGHPPAALTTGLVVFLTAIYLLSFIFALREDLSLAPESLFKLQMSRLSLYPLIHLSLPHLLFNVLAIWAPLNLFEETHGTVYTGVFLNLSALFAGILYCLLGKLLYPEALVAGASGWCFTLFAYYSFKESQIRPRTRIFRTDYSIPTLYTPLVLLVAIAVVIPGSSFWGHFFGLCVGYAIGYKESWFNKITPPGWIITKIEKSLDGLIRLIPWGIKYYRDEDIDRTKDYEPLMSTETPLPLHNDNSGTVLGTA.

Residues 1–16 (MNWKSYVFPGGHPPAA) are Cytoplasmic-facing. Residues 17–37 (LTTGLVVFLTAIYLLSFIFAL) form a helical membrane-spanning segment. The Lumenal portion of the chain corresponds to 38 to 57 (REDLSLAPESLFKLQMSRLS). The helical transmembrane segment at 58 to 78 (LYPLIHLSLPHLLFNVLAIWA) threads the bilayer. The Cytoplasmic segment spans residues 79–89 (PLNLFEETHGT). Residues 90–110 (VYTGVFLNLSALFAGILYCLL) traverse the membrane as a helical segment. The Lumenal segment spans residues 111–112 (GK). A helical transmembrane segment spans residues 113–133 (LLYPEALVAGASGWCFTLFAY). Residue S124 is the Nucleophile of the active site. At 134-151 (YSFKESQIRPRTRIFRTD) the chain is on the cytoplasmic side. The helical transmembrane segment at 152–168 (YSIPTLYTPLVLLVAIA) threads the bilayer. The Lumenal segment spans residues 169 to 174 (VVIPGS). The chain crosses the membrane as a helical span at residues 175–191 (SFWGHFFGLCVGYAIGY). H179 is an active-site residue. The Cytoplasmic segment spans residues 192 to 262 (KESWFNKITP…DNSGTVLGTA (71 aa)). A disordered region spans residues 243–262 (STETPLPLHNDNSGTVLGTA). Polar residues predominate over residues 252-262 (NDNSGTVLGTA).

This sequence belongs to the peptidase S54 family. As to quaternary structure, interacts with SNX3.

Its subcellular location is the golgi apparatus membrane. It is found in the golgi apparatus. The protein resides in the cis-Golgi network membrane. The enzyme catalyses Cleaves type-1 transmembrane domains using a catalytic dyad composed of serine and histidine that are contributed by different transmembrane domains.. In terms of biological role, probable rhomboid-type serine protease that catalyzes intramembrane proteolysis. The sequence is that of Rhomboid-type serine protease 2 (RBD2) from Saccharomyces cerevisiae (strain ATCC 204508 / S288c) (Baker's yeast).